A 425-amino-acid chain; its full sequence is Enolase (425 aa).

Residue Gln162 participates in (2R)-2-phosphoglycerate binding. Glu204 serves as the catalytic Proton donor. Asp241, Glu282, and Asp309 together coordinate Mg(2+). Residues Lys334, Arg363, Ser364, and Lys385 each contribute to the (2R)-2-phosphoglycerate site. The active-site Proton acceptor is Lys334.

This sequence belongs to the enolase family. Requires Mg(2+) as cofactor.

The protein localises to the cytoplasm. It is found in the secreted. It localises to the cell surface. It catalyses the reaction (2R)-2-phosphoglycerate = phosphoenolpyruvate + H2O. It participates in carbohydrate degradation; glycolysis; pyruvate from D-glyceraldehyde 3-phosphate: step 4/5. In terms of biological role, catalyzes the reversible conversion of 2-phosphoglycerate (2-PG) into phosphoenolpyruvate (PEP). It is essential for the degradation of carbohydrates via glycolysis. This is Enolase from Corynebacterium jeikeium (strain K411).